Here is a 631-residue protein sequence, read N- to C-terminus: Phosphomethylpyrimidine synthase (631 aa).

Residues Asn-239, Met-268, Tyr-297, His-333, 353 to 355, 394 to 397, and Glu-433 each bind substrate; these read SRG and DGLR. Residue His-437 participates in Zn(2+) binding. Tyr-460 is a substrate binding site. A Zn(2+)-binding site is contributed by His-501. The [4Fe-4S] cluster site is built by Cys-581, Cys-584, and Cys-589.

It belongs to the ThiC family. In terms of assembly, homodimer. It depends on [4Fe-4S] cluster as a cofactor.

It catalyses the reaction 5-amino-1-(5-phospho-beta-D-ribosyl)imidazole + S-adenosyl-L-methionine = 4-amino-2-methyl-5-(phosphooxymethyl)pyrimidine + CO + 5'-deoxyadenosine + formate + L-methionine + 3 H(+). It participates in cofactor biosynthesis; thiamine diphosphate biosynthesis. Catalyzes the synthesis of the hydroxymethylpyrimidine phosphate (HMP-P) moiety of thiamine from aminoimidazole ribotide (AIR) in a radical S-adenosyl-L-methionine (SAM)-dependent reaction. This chain is Phosphomethylpyrimidine synthase, found in Salmonella schwarzengrund (strain CVM19633).